Reading from the N-terminus, the 465-residue chain is MSNPFPAHFLWGGAIAANQVEGAYLTDGKGLSTSDLQPQGIFGEIVTRQPGDSGIKDVAIDFYHRYPQDIALFAEMGFTCLRISIAWTRIFPQGDEAEPNEAGLAFYDRLFDELAKYGIQPLVTLSHYEMPYGLVEKHGGWGNRLTIDCFERYARTVFARYRHKVKRWLTFNEINMSLHAPFTGVGLPPDSDKAAIYQAIHHQLVASARAVKACHDMIPDAQIGNMLLGAMLYPLTSKPEDVMESLHQNREWLFFGDVQVRGAYPGYMHRYFREQGITLNITAQDKQDLKATVDFISFSYYMTGCVTTDEAQLEKTRGNILNMVPNPYLESSEWGWQIDPLGLRYLLNFLYDRYQKPLFIVENGLGAKDKIEENGDIYDDYRIRYLNDHLVQVGEAIDDGVEVLGYTCWGPIDLVSASKAEMSKRYGFIYVDRDDAGHGSLERRRKKSFYWYQSVIASHGKTLTR.

Catalysis depends on Glu173, which acts as the Proton donor. The active-site Nucleophile is the Glu362.

It belongs to the glycosyl hydrolase 1 family.

The enzyme catalyses 6-phospho-beta-D-glucosyl-(1-&gt;4)-D-glucose + H2O = D-glucose 6-phosphate + D-glucose. The protein operates within carbohydrate metabolism; beta-glucoside metabolism. This Dickeya chrysanthemi (Pectobacterium chrysanthemi) protein is 6-phospho-beta-glucosidase (arbB).